We begin with the raw amino-acid sequence, 873 residues long: MKSAEIREKFLKFFESKGHQIVASSSLVPHDDPTLLFTNAGMNQFKDVFLGFDKRPYSRATTSQKCVRAGGKHNDLENVGYTARHHTFFEMLGNFSFGDYFKHDAITYAWELLTEEFGLPKDKLWVTVYADDDEAYDIWTKEIGVPAERVIRIGDNKGARYASDNFWMMGDTGPCGPCTEIFYDHGPEIWGGPPGSPDEDGDRYIEIWNNVFMQFNRDEAGVMHPLPRPSVDTGMGLERVSAVLQHVHSNYEIDLFQTLIRAAARETGCADLDSPSLKVIADHIRACSFLIADGVIPGNEGRGYVLRRIIRRAIRHGYKLGSRAAFFHRLVPDLVTEMGPAYPELKAGQARVADVLKQEEERFFATIENGMAILETELAAMATAGSRTFNGETAFKLHDTYGFPLDLTADVCRERDVTVDAAAFDAAMARQKEQARAAGKFRMAMNLEYEGPETKFHGYERLEERGTVLALYKDGAPVVELQEGDIGVVVLDNTPFYAESGGQVGDRGELRGSAGIFEVEDTQKIQAAVYGHHGVVKTGRLAVGQELGARVDGEARASTQRNHSVTHLMHKALREVLGAHVQQKGSQVDPDKTRFDFAHTAPLSPEEIREVEDLVNAEILANVATEARVMSIDDAQKSGAMMLFGEKYGDEVRVLAIGSSKELCGGTHVARTGDIGLFKIVSEGGVAAGVRRIEAVTGANALRYAQEQERRVQGISALLKVQPDEVAERIAGILDNVRALEKELARMKSRLAASQGDELVAQAVEVRGAKVLAAMLEGADVATLRETLDKLKDKLKSAVIVLAAVADGRVSLIAGVTSDLTAKLKAGELVNMVAQQVGGKGGGRPDMAQAGGTDPAHLPAALASVKAWAEARL.

Positions 563, 567, 664, and 668 each coordinate Zn(2+).

Belongs to the class-II aminoacyl-tRNA synthetase family. Requires Zn(2+) as cofactor.

The protein localises to the cytoplasm. It carries out the reaction tRNA(Ala) + L-alanine + ATP = L-alanyl-tRNA(Ala) + AMP + diphosphate. In terms of biological role, catalyzes the attachment of alanine to tRNA(Ala) in a two-step reaction: alanine is first activated by ATP to form Ala-AMP and then transferred to the acceptor end of tRNA(Ala). Also edits incorrectly charged Ser-tRNA(Ala) and Gly-tRNA(Ala) via its editing domain. This is Alanine--tRNA ligase from Aromatoleum aromaticum (strain DSM 19018 / LMG 30748 / EbN1) (Azoarcus sp. (strain EbN1)).